A 654-amino-acid polypeptide reads, in one-letter code: Protein LYK2 (654 aa).

The N-terminal stretch at 1 to 25 (MAVSVSKQYMTSLVVILLFISLSSL) is a signal peptide. Over 26–241 (SPTSTSHSCD…PSKKKRSKMK (216 aa)) the chain is Extracellular. Cystine bridges form between cysteine 50–cysteine 102, cysteine 57–cysteine 163, and cysteine 100–cysteine 161. N-linked (GlcNAc...) asparagine glycans are attached at residues asparagine 103, asparagine 170, asparagine 193, and asparagine 204. The LysM; degenerate repeat unit spans residues 177-217 (YPVGVRDSVSSLAVRFNTTEDAIVSANNKSGVVPLKPALIP). Residues 218-238 (LDHKPEKQGSRKRNPSKKKRS) form a disordered region. Over residues 227 to 238 (SRKRNPSKKKRS) the composition is skewed to basic residues. A helical membrane pass occupies residues 242-262 (LMIAVSSAIAGVCGLVTLMVF). Over 263-654 (GYLHWKKETQ…PLVKKSSIID (392 aa)) the chain is Cytoplasmic. One can recognise a Protein kinase domain in the interval 324-619 (TPRKPVLEIY…EIAERVSRLV (296 aa)). ATP contacts are provided by residues 330–338 (LEIYAFEEL) and lysine 368.

The protein belongs to the protein kinase superfamily. Ser/Thr protein kinase family.

It is found in the cell membrane. Its function is as follows. May recognize microbe-derived N-acetylglucosamine (NAG)-containing ligands. In Arabidopsis thaliana (Mouse-ear cress), this protein is Protein LYK2 (LYK2).